The following is a 322-amino-acid chain: MSQLYDITIVGGGPVGLFAAFYAHXRQAKVQIIDSLPQLGGQPAILYPEKEILDVPGFPNLTGEELTNRLIEQLNGFDTPIHLNETVLEIDKQEEEFAITTSKGSHLTKTVIIAMGGGAFKPRPLELESVEGYENIHYHVSNIQQYAGKKVTILGGGDSAVDWALAFEKIAPTTLVHRRDNFRALEHSVQALQESSVTIKTPFAPSQLLGNGKTLDKLEITKVKSDETETIDLDHLFVNYGFKSSVGNLKNWGLDLNRHKIIVNSKQESSQAGIYAIGDCCYYDGKIDLIATGLGEAPTAVNNAINYIDPEQKVQPKHSTSL.

FAD-binding residues include Asp34, Gln42, Tyr47, Val87, Phe120, Asp279, and Thr320.

Belongs to the ferredoxin--NADP reductase type 2 family. As to quaternary structure, homodimer. FAD is required as a cofactor.

It carries out the reaction 2 reduced [2Fe-2S]-[ferredoxin] + NADP(+) + H(+) = 2 oxidized [2Fe-2S]-[ferredoxin] + NADPH. In Streptococcus pneumoniae serotype 19F (strain G54), this protein is Ferredoxin--NADP reductase.